The chain runs to 1122 residues: Cytosolic carboxypeptidase 4 (1122 aa).

A disordered region spans residues Pro287–Gly338. The segment covering Thr299 to Lys313 has biased composition (acidic residues). Positions Tyr731 to Glu1021 constitute a Peptidase M14 domain. Zn(2+)-binding residues include His803, Glu806, and His900. Glu985 acts as the Proton donor/acceptor in catalysis. The tract at residues Cys1099 to Thr1122 is disordered.

The protein belongs to the peptidase M14 family. As to quaternary structure, interacts with MYLK. Interacts with TCF4. Requires Zn(2+) as cofactor. As to expression, widely expressed at low level. Expressed in eye, muscle, pituitary, testis and to a lower extent in brain.

It localises to the cytoplasm. Its subcellular location is the cytosol. The catalysed reaction is (L-glutamyl)(n+1)-gamma-L-glutamyl-L-glutamyl-[protein] + H2O = (L-glutamyl)(n)-gamma-L-glutamyl-L-glutamyl-[protein] + L-glutamate. It carries out the reaction C-terminal L-alpha-aminoacyl-L-glutamyl-L-glutamyl-[tubulin] + H2O = C-terminal L-alpha-aminoacyl-L-glutamyl-[tubulin] + L-glutamate. In terms of biological role, metallocarboxypeptidase that mediates deglutamylation of tubulin and non-tubulin target proteins. Catalyzes the removal of polyglutamate side chains present on the gamma-carboxyl group of glutamate residues within the C-terminal tail of tubulin protein. Specifically cleaves tubulin long-side-chains, while it is not able to remove the branching point glutamate. Also catalyzes the removal of polyglutamate residues from the carboxy-terminus of non-tubulin proteins such as MYLK. This chain is Cytosolic carboxypeptidase 4, found in Mus musculus (Mouse).